The chain runs to 417 residues: NADH-quinone oxidoreductase subunit D (417 aa).

It belongs to the complex I 49 kDa subunit family. NDH-1 is composed of 14 different subunits. Subunits NuoB, C, D, E, F, and G constitute the peripheral sector of the complex.

The protein localises to the cell inner membrane. It catalyses the reaction a quinone + NADH + 5 H(+)(in) = a quinol + NAD(+) + 4 H(+)(out). NDH-1 shuttles electrons from NADH, via FMN and iron-sulfur (Fe-S) centers, to quinones in the respiratory chain. The immediate electron acceptor for the enzyme in this species is believed to be ubiquinone. Couples the redox reaction to proton translocation (for every two electrons transferred, four hydrogen ions are translocated across the cytoplasmic membrane), and thus conserves the redox energy in a proton gradient. The polypeptide is NADH-quinone oxidoreductase subunit D (Ruthia magnifica subsp. Calyptogena magnifica).